The sequence spans 203 residues: A-type ATP synthase subunit E (203 aa).

This sequence belongs to the V-ATPase E subunit family. Has multiple subunits with at least A(3), B(3), C, D, E, F, H, I and proteolipid K(x).

It localises to the cell membrane. In terms of biological role, component of the A-type ATP synthase that produces ATP from ADP in the presence of a proton gradient across the membrane. The chain is A-type ATP synthase subunit E from Methanococcus vannielii (strain ATCC 35089 / DSM 1224 / JCM 13029 / OCM 148 / SB).